A 152-amino-acid chain; its full sequence is Cytochrome c-type biogenesis protein CcmE (152 aa).

The Cytoplasmic portion of the chain corresponds to 1-8 (MQARRKTR). Residues 9–29 (LYIVLAVLAGLGLTVSLTLYA) traverse the membrane as a helical; Signal-anchor for type II membrane protein segment. Over 30–152 (LSSNIDLFYT…MTPEKTGAQP (123 aa)) the chain is Periplasmic. Heme contacts are provided by His130 and Tyr134. Residues 133 to 152 (NYTPPEVKNAMTPEKTGAQP) are disordered.

This sequence belongs to the CcmE/CycJ family.

It is found in the cell inner membrane. In terms of biological role, heme chaperone required for the biogenesis of c-type cytochromes. Transiently binds heme delivered by CcmC and transfers the heme to apo-cytochromes in a process facilitated by CcmF and CcmH. This Klebsiella pneumoniae (strain 342) protein is Cytochrome c-type biogenesis protein CcmE.